A 342-amino-acid polypeptide reads, in one-letter code: tRNA-specific 2-thiouridylase MnmA (342 aa).

ATP-binding positions include 6–13 (LLSGGVDS) and Leu-32. Cys-92 acts as the Nucleophile in catalysis. The cysteines at positions 92 and 191 are disulfide-linked. Gly-116 lines the ATP pocket. The tract at residues 138–140 (KDQ) is interaction with tRNA. Cys-191 acts as the Cysteine persulfide intermediate in catalysis. The tract at residues 293-294 (RY) is interaction with tRNA.

Belongs to the MnmA/TRMU family.

It is found in the cytoplasm. It carries out the reaction S-sulfanyl-L-cysteinyl-[protein] + uridine(34) in tRNA + AH2 + ATP = 2-thiouridine(34) in tRNA + L-cysteinyl-[protein] + A + AMP + diphosphate + H(+). Catalyzes the 2-thiolation of uridine at the wobble position (U34) of tRNA, leading to the formation of s(2)U34. The chain is tRNA-specific 2-thiouridylase MnmA from Helicobacter pylori (strain HPAG1).